A 310-amino-acid chain; its full sequence is Porphobilinogen deaminase (310 aa).

Cysteine 241 is modified (S-(dipyrrolylmethanemethyl)cysteine).

Belongs to the HMBS family. Monomer. Dipyrromethane is required as a cofactor.

The enzyme catalyses 4 porphobilinogen + H2O = hydroxymethylbilane + 4 NH4(+). It functions in the pathway porphyrin-containing compound metabolism; protoporphyrin-IX biosynthesis; coproporphyrinogen-III from 5-aminolevulinate: step 2/4. Its function is as follows. Tetrapolymerization of the monopyrrole PBG into the hydroxymethylbilane pre-uroporphyrinogen in several discrete steps. This chain is Porphobilinogen deaminase, found in Pelobacter propionicus (strain DSM 2379 / NBRC 103807 / OttBd1).